A 90-amino-acid polypeptide reads, in one-letter code: Small ribosomal subunit protein bS20 (90 aa).

Residues 1-29 are disordered; that stretch reads MANTASAEKRNRQAQKRRARNVQVRTGVK.

This sequence belongs to the bacterial ribosomal protein bS20 family.

Its function is as follows. Binds directly to 16S ribosomal RNA. The protein is Small ribosomal subunit protein bS20 of Anaeromyxobacter sp. (strain Fw109-5).